A 369-amino-acid chain; its full sequence is MWIKELNLTHYRNYQQASAAFSPGLNVFIGDNAQGKTNFLEAIYFLSVTRSHRTKSDKDLIYFDERDCSISGTLERLSGRVQLEILLSDKGRITKINTLKQAKLSDYIGAMMVVLFAPEDLQLVKGSPSLRRKFMDIDLGQIKPVYLSDLSHYNHVLKQRNAYLKSVHQLDSDFLSVLDEQLVTYGSRVMAHRLAFVQSLAKEASKHHQAISNGLEKLSISYQASVSFEHQQEIYQQFMDQLKATHQRDFLRKNTGVGPHRDDLVFYINDMNANFASQGQHRSLILSLKMAEVSLMKQLTGDNPILLLDDVMSELDNIRQTKLLEAVKKENVQTFITTTSLEHLSQLPKDISLFKVNKGTIALDSVMID.

Glycine 30–threonine 37 is an ATP binding site.

The protein belongs to the RecF family.

It is found in the cytoplasm. Functionally, the RecF protein is involved in DNA metabolism; it is required for DNA replication and normal SOS inducibility. RecF binds preferentially to single-stranded, linear DNA. It also seems to bind ATP. The chain is DNA replication and repair protein RecF from Streptococcus equi subsp. zooepidemicus (strain H70).